A 181-amino-acid polypeptide reads, in one-letter code: Adenine phosphoribosyltransferase (181 aa).

This sequence belongs to the purine/pyrimidine phosphoribosyltransferase family. In terms of assembly, homodimer.

Its subcellular location is the cytoplasm. It catalyses the reaction AMP + diphosphate = 5-phospho-alpha-D-ribose 1-diphosphate + adenine. It participates in purine metabolism; AMP biosynthesis via salvage pathway; AMP from adenine: step 1/1. Its function is as follows. Catalyzes a salvage reaction resulting in the formation of AMP, that is energically less costly than de novo synthesis. The chain is Adenine phosphoribosyltransferase from Vibrio vulnificus (strain CMCP6).